A 964-amino-acid chain; its full sequence is Activator of stress genes 1 (964 aa).

Residues 21–47 (CDECRKKKVKCDGQQPCIHCTVYSYEC) constitute a DNA-binding region (zn(2)-C6 fungal-type). The tract at residues 104–125 (ASTIPASNNPSKPRKYKTKSTR) is disordered. The residue at position 166 (Ser-166) is a Phosphoserine; by ATM or ATR. Ser-186 carries the post-translational modification Phosphoserine. 3 stretches are compositionally biased toward polar residues: residues 190–201 (PVLSSNSKNSTP), 209–225 (KSDS…DSVD), and 733–759 (NNTP…TNMS). Disordered regions lie at residues 190-225 (PVLS…DSVD), 733-764 (NNTP…ERDP), and 800-900 (NSAF…SPSY). Residues 800–896 (NSAFDFSSSK…NDFGIKIDNN (97 aa)) are compositionally biased toward low complexity. Position 963 is a phosphoserine (Ser-963).

It belongs to the ASG1 family.

The protein resides in the nucleus. Its function is as follows. Probable transcription factor involved in the stress response. This is Activator of stress genes 1 (ASG1) from Saccharomyces cerevisiae (strain ATCC 204508 / S288c) (Baker's yeast).